We begin with the raw amino-acid sequence, 513 residues long: Maturase K (513 aa).

Belongs to the intron maturase 2 family. MatK subfamily.

The protein localises to the plastid. The protein resides in the chloroplast. Functionally, usually encoded in the trnK tRNA gene intron. Probably assists in splicing its own and other chloroplast group II introns. The chain is Maturase K from Byblis liniflora (Carnivorous plant).